We begin with the raw amino-acid sequence, 228 residues long: Isoprenyl transferase (228 aa).

Residue Asp9 is part of the active site. Asp9 contacts Mg(2+). Substrate contacts are provided by residues 10-13 (GNGR), Trp14, Arg22, His26, and 54-56 (STE). The Proton acceptor role is filled by Asn57. Substrate contacts are provided by residues Trp58, Arg60, Arg175, and 181–183 (RMS). Glu194 contacts Mg(2+).

Belongs to the UPP synthase family. Homodimer. Mg(2+) is required as a cofactor.

Its function is as follows. Catalyzes the condensation of isopentenyl diphosphate (IPP) with allylic pyrophosphates generating different type of terpenoids. The chain is Isoprenyl transferase from Treponema pallidum (strain Nichols).